A 48-amino-acid chain; its full sequence is U-actitoxin-Cgg3 (48 aa).

3 cysteine pairs are disulfide-bonded: C5–C41, C7–C33, and C23–C42. S46 is subject to Serine amide. Residues 47-48 (GR) constitute a propeptide, removed in mature form.

This sequence belongs to the sea anemone type 3 (BDS) potassium channel toxin family.

It localises to the secreted. Its function is as follows. Neurotoxin that induces paralysis when injected into crabs. May function in antimicrobial activity as it displays inhibitory activity towards the B.licheniformis enzyme subtilisin A (SUBTA) and the recombinant S.maltophilia protease 1 (rStmPr1) enzyme. Also displays inhibitory activity against various proteases including the porcine pancreatic elastase (PPE) and proteinase K (PK). The protein is U-actitoxin-Cgg3 of Condylactis gigantea (Giant Caribbean anemone).